The chain runs to 490 residues: Glutamyl-tRNA(Gln) amidotransferase subunit A (490 aa).

Catalysis depends on charge relay system residues Lys76 and Ser151. Ser175 (acyl-ester intermediate) is an active-site residue.

The protein belongs to the amidase family. GatA subfamily. Heterotrimer of A, B and C subunits.

The catalysed reaction is L-glutamyl-tRNA(Gln) + L-glutamine + ATP + H2O = L-glutaminyl-tRNA(Gln) + L-glutamate + ADP + phosphate + H(+). Functionally, allows the formation of correctly charged Gln-tRNA(Gln) through the transamidation of misacylated Glu-tRNA(Gln) in organisms which lack glutaminyl-tRNA synthetase. The reaction takes place in the presence of glutamine and ATP through an activated gamma-phospho-Glu-tRNA(Gln). This is Glutamyl-tRNA(Gln) amidotransferase subunit A from Aromatoleum aromaticum (strain DSM 19018 / LMG 30748 / EbN1) (Azoarcus sp. (strain EbN1)).